We begin with the raw amino-acid sequence, 203 residues long: A-type ATP synthase subunit E (203 aa).

The protein belongs to the V-ATPase E subunit family. Has multiple subunits with at least A(3), B(3), C, D, E, F, H, I and proteolipid K(x).

The protein resides in the cell membrane. Component of the A-type ATP synthase that produces ATP from ADP in the presence of a proton gradient across the membrane. This Methanococcus maripaludis (strain C6 / ATCC BAA-1332) protein is A-type ATP synthase subunit E.